A 312-amino-acid polypeptide reads, in one-letter code: Speedy protein A (312 aa).

Residues 67-199 are speedy/Ringo box; Required for CDK-binding; that stretch reads RQEMTAFFKL…SHYIWQRERS (133 aa). Ser221 is subject to Phosphoserine. Position 223 is a phosphothreonine (Thr223).

The protein belongs to the Speedy/Ringo family. In terms of assembly, interacts with CDK1. Interacts with CDK2. May interact with CDKN1B/KIP1. Identified in a complex with CDK2 and CDKN1B/KIP1, where it interacts primarily with CDK2.

The protein resides in the nucleus. Its function is as follows. Regulates the G1/S phase transition of the cell cycle by binding and activating CDK1 and CDK2. Contributes to CDK2 activation without promoting CDK2 phosphorylation, by inducing a conformation change of the CDK2 T-loop that obstructs the substrate-binding cleft prior to kinase activation. Interferes with CDKN1B-mediated inhibition of CDK2. Mediates cell survival during the DNA damage process through activation of CDK2. In Rattus norvegicus (Rat), this protein is Speedy protein A.